A 276-amino-acid polypeptide reads, in one-letter code: Small ribosomal subunit protein uS2 (276 aa).

Disordered regions lie at residues 209 to 233 (AQEA…AADV) and 252 to 276 (VDWS…SSWE). The span at 211–231 (EAAAAAQAAKETAEPTTEGAA) shows a compositional bias: low complexity.

This sequence belongs to the universal ribosomal protein uS2 family. In terms of assembly, component of the small ribosomal subunit. Mature ribosomes consist of a small (40S) and a large (60S) subunit. The 40S subunit contains about 33 different proteins and 1 molecule of RNA (18S). The 60S subunit contains about 49 different proteins and 3 molecules of RNA (25S, 5.8S and 5S). Interacts with RPS21.

It localises to the cytoplasm. In terms of biological role, required for the assembly and/or stability of the 40S ribosomal subunit. Required for the processing of the 20S rRNA-precursor to mature 18S rRNA in a late step of the maturation of 40S ribosomal subunits. This Mycosarcoma maydis (Corn smut fungus) protein is Small ribosomal subunit protein uS2.